We begin with the raw amino-acid sequence, 529 residues long: Bifunctional purine biosynthesis protein PurH (529 aa).

The region spanning 1–148 is the MGS-like domain; that stretch reads MQQRRPVRRA…KNHKDVAIVV (148 aa).

It belongs to the PurH family.

The catalysed reaction is (6R)-10-formyltetrahydrofolate + 5-amino-1-(5-phospho-beta-D-ribosyl)imidazole-4-carboxamide = 5-formamido-1-(5-phospho-D-ribosyl)imidazole-4-carboxamide + (6S)-5,6,7,8-tetrahydrofolate. It catalyses the reaction IMP + H2O = 5-formamido-1-(5-phospho-D-ribosyl)imidazole-4-carboxamide. It functions in the pathway purine metabolism; IMP biosynthesis via de novo pathway; 5-formamido-1-(5-phospho-D-ribosyl)imidazole-4-carboxamide from 5-amino-1-(5-phospho-D-ribosyl)imidazole-4-carboxamide (10-formyl THF route): step 1/1. It participates in purine metabolism; IMP biosynthesis via de novo pathway; IMP from 5-formamido-1-(5-phospho-D-ribosyl)imidazole-4-carboxamide: step 1/1. In Salmonella paratyphi B (strain ATCC BAA-1250 / SPB7), this protein is Bifunctional purine biosynthesis protein PurH.